The sequence spans 657 residues: Kinesin-like protein KIF22 (657 aa).

The segment at 1-33 (MNVRAKKKPQQREMASASSGPSRSLSKGGVSRR) is disordered. Over residues 16–33 (SASSGPSRSLSKGGVSRR) the composition is skewed to low complexity. Residues 38-360 (RVRVAVRLRP…LNFTARSKEV (323 aa)) form the Kinesin motor domain. ATP is bound at residue 119-126 (GPTGAGKT). Residues 388-415 (PSEAKKAKGPEEESTGSPESTAAPASAS) form a disordered region. Positions 402-415 (TGSPESTAAPASAS) are enriched in low complexity. Serine 404, serine 419, and serine 444 each carry phosphoserine. Lysine 457 is covalently cross-linked (Glycyl lysine isopeptide (Lys-Gly) (interchain with G-Cter in SUMO2)). The stretch at 457 to 502 (KRERMVLIKTVEEKNLEIERLKMKQKELEAKVLAQEALDPKEKENT) forms a coiled coil. A phosphoserine mark is found at serine 537, serine 554, and serine 573.

The protein belongs to the TRAFAC class myosin-kinesin ATPase superfamily. Kinesin family. Interacts with FAM83D and SIAH1. Ubiquitinated; mediated by SIAH1 and leading to its subsequent proteasomal degradation.

Its subcellular location is the nucleus. The protein localises to the cytoplasm. It is found in the cytoskeleton. Kinesin family member that is involved in spindle formation and the movements of chromosomes during mitosis and meiosis. Binds to microtubules and to DNA. Plays a role in congression of laterally attached chromosomes in NDC80-depleted cells. This chain is Kinesin-like protein KIF22 (Kif22), found in Rattus norvegicus (Rat).